An 89-amino-acid chain; its full sequence is Small ribosomal subunit protein uS15 (89 aa).

Positions 1-10 (MSITAERKAE) are enriched in basic and acidic residues. The segment at 1 to 24 (MSITAERKAEVIQGNANKAGDTGS) is disordered.

It belongs to the universal ribosomal protein uS15 family. As to quaternary structure, part of the 30S ribosomal subunit. Forms a bridge to the 50S subunit in the 70S ribosome, contacting the 23S rRNA.

Its function is as follows. One of the primary rRNA binding proteins, it binds directly to 16S rRNA where it helps nucleate assembly of the platform of the 30S subunit by binding and bridging several RNA helices of the 16S rRNA. Functionally, forms an intersubunit bridge (bridge B4) with the 23S rRNA of the 50S subunit in the ribosome. The polypeptide is Small ribosomal subunit protein uS15 (Rhodopseudomonas palustris (strain BisB5)).